A 474-amino-acid chain; its full sequence is Probable periplasmic serine endoprotease DegP-like (474 aa).

The signal sequence occupies residues 1-25 (MRNLKSVTPLLMAALLWGQSLLAQA). Catalysis depends on charge relay system residues His-113, Asp-143, and Ser-216. Substrate-binding positions include 214–216 (GNS) and 271–275 (LGVVI). PDZ domains lie at 260-351 (LKAD…VRDG) and 357-463 (KVTI…LRQG).

This sequence belongs to the peptidase S1C family.

It is found in the periplasm. The enzyme catalyses Acts on substrates that are at least partially unfolded. The cleavage site P1 residue is normally between a pair of hydrophobic residues, such as Val-|-Val.. Functionally, might be efficient in the degradation of transiently denatured and unfolded proteins which accumulate in the periplasm following stress conditions. The polypeptide is Probable periplasmic serine endoprotease DegP-like (Ectopseudomonas mendocina (strain ymp) (Pseudomonas mendocina)).